A 108-amino-acid chain; its full sequence is MNEARFHDLVDALQQQVEDAFDDSDLDLDLENAGGVLTVRFENGSQLILSRQAPLRQLWVAAKSGGFHFDYDEASGLWRHDGSQEPLGALLNRATLEQGGEDVEFPGL.

This sequence belongs to the frataxin family.

Functionally, involved in iron-sulfur (Fe-S) cluster assembly. May act as a regulator of Fe-S biogenesis. The chain is Iron-sulfur cluster assembly protein CyaY from Pseudomonas aeruginosa (strain ATCC 15692 / DSM 22644 / CIP 104116 / JCM 14847 / LMG 12228 / 1C / PRS 101 / PAO1).